A 336-amino-acid polypeptide reads, in one-letter code: Holliday junction branch migration complex subunit RuvB (336 aa).

The segment at Met1–Tyr182 is large ATPase domain (RuvB-L). ATP contacts are provided by residues Leu21, Arg22, Gly63, Lys66, Thr67, Thr68, Glu129–Tyr131, Arg172, Tyr182, and Arg219. Thr67 contacts Mg(2+). Residues Thr183–Glu253 are small ATPAse domain (RuvB-S). Positions Lys256–Ser336 are head domain (RuvB-H). DNA is bound by residues Arg311 and Arg316.

It belongs to the RuvB family. As to quaternary structure, homohexamer. Forms an RuvA(8)-RuvB(12)-Holliday junction (HJ) complex. HJ DNA is sandwiched between 2 RuvA tetramers; dsDNA enters through RuvA and exits via RuvB. An RuvB hexamer assembles on each DNA strand where it exits the tetramer. Each RuvB hexamer is contacted by two RuvA subunits (via domain III) on 2 adjacent RuvB subunits; this complex drives branch migration. In the full resolvosome a probable DNA-RuvA(4)-RuvB(12)-RuvC(2) complex forms which resolves the HJ.

It localises to the cytoplasm. The enzyme catalyses ATP + H2O = ADP + phosphate + H(+). In terms of biological role, the RuvA-RuvB-RuvC complex processes Holliday junction (HJ) DNA during genetic recombination and DNA repair, while the RuvA-RuvB complex plays an important role in the rescue of blocked DNA replication forks via replication fork reversal (RFR). RuvA specifically binds to HJ cruciform DNA, conferring on it an open structure. The RuvB hexamer acts as an ATP-dependent pump, pulling dsDNA into and through the RuvAB complex. RuvB forms 2 homohexamers on either side of HJ DNA bound by 1 or 2 RuvA tetramers; 4 subunits per hexamer contact DNA at a time. Coordinated motions by a converter formed by DNA-disengaged RuvB subunits stimulates ATP hydrolysis and nucleotide exchange. Immobilization of the converter enables RuvB to convert the ATP-contained energy into a lever motion, pulling 2 nucleotides of DNA out of the RuvA tetramer per ATP hydrolyzed, thus driving DNA branch migration. The RuvB motors rotate together with the DNA substrate, which together with the progressing nucleotide cycle form the mechanistic basis for DNA recombination by continuous HJ branch migration. Branch migration allows RuvC to scan DNA until it finds its consensus sequence, where it cleaves and resolves cruciform DNA. In Lachnoclostridium phytofermentans (strain ATCC 700394 / DSM 18823 / ISDg) (Clostridium phytofermentans), this protein is Holliday junction branch migration complex subunit RuvB.